We begin with the raw amino-acid sequence, 135 residues long: Large ribosomal subunit protein eL32 (135 aa).

Lysine 9 is covalently cross-linked (Glycyl lysine isopeptide (Lys-Gly) (interchain with G-Cter in SUMO2)). Lysine 50 carries the post-translational modification N6-succinyllysine. At serine 62 the chain carries Phosphoserine.

It belongs to the eukaryotic ribosomal protein eL32 family. As to quaternary structure, component of the large ribosomal subunit.

The protein localises to the cytoplasm. Functionally, component of the large ribosomal subunit. The ribosome is a large ribonucleoprotein complex responsible for the synthesis of proteins in the cell. In Macaca fascicularis (Crab-eating macaque), this protein is Large ribosomal subunit protein eL32 (RPL32).